Here is a 478-residue protein sequence, read N- to C-terminus: Ribulose bisphosphate carboxylase large chain (478 aa).

Residues 1 to 2 (MS) constitute a propeptide that is removed on maturation. Pro3 bears the N-acetylproline mark. N6,N6,N6-trimethyllysine is present on Lys14. Substrate-binding residues include Asn123 and Thr173. The active-site Proton acceptor is the Lys175. Lys177 contributes to the substrate binding site. Mg(2+) is bound by residues Lys201, Asp203, and Glu204. An N6-carboxylysine modification is found at Lys201. The active-site Proton acceptor is the His294. Arg295, His327, and Ser379 together coordinate substrate.

Belongs to the RuBisCO large chain family. Type I subfamily. As to quaternary structure, heterohexadecamer of 8 large chains and 8 small chains; disulfide-linked. The disulfide link is formed within the large subunit homodimers. It depends on Mg(2+) as a cofactor. The disulfide bond which can form in the large chain dimeric partners within the hexadecamer appears to be associated with oxidative stress and protein turnover.

Its subcellular location is the plastid. It is found in the chloroplast. The catalysed reaction is 2 (2R)-3-phosphoglycerate + 2 H(+) = D-ribulose 1,5-bisphosphate + CO2 + H2O. The enzyme catalyses D-ribulose 1,5-bisphosphate + O2 = 2-phosphoglycolate + (2R)-3-phosphoglycerate + 2 H(+). In terms of biological role, ruBisCO catalyzes two reactions: the carboxylation of D-ribulose 1,5-bisphosphate, the primary event in carbon dioxide fixation, as well as the oxidative fragmentation of the pentose substrate in the photorespiration process. Both reactions occur simultaneously and in competition at the same active site. This is Ribulose bisphosphate carboxylase large chain from Lemna minor (Common duckweed).